The sequence spans 79 residues: Small ribosomal subunit protein bS18 (79 aa).

Belongs to the bacterial ribosomal protein bS18 family. As to quaternary structure, part of the 30S ribosomal subunit. Forms a tight heterodimer with protein bS6.

Functionally, binds as a heterodimer with protein bS6 to the central domain of the 16S rRNA, where it helps stabilize the platform of the 30S subunit. In Micrococcus luteus (strain ATCC 4698 / DSM 20030 / JCM 1464 / CCM 169 / CCUG 5858 / IAM 1056 / NBRC 3333 / NCIMB 9278 / NCTC 2665 / VKM Ac-2230) (Micrococcus lysodeikticus), this protein is Small ribosomal subunit protein bS18.